Consider the following 606-residue polypeptide: Aspartate--tRNA(Asp/Asn) ligase (606 aa).

Glu-177 contributes to the L-aspartate binding site. Residues 201-204 (QLFK) form an aspartate region. Arg-223 is an L-aspartate binding site. Residues 223–225 (RDE) and Gln-232 contribute to the ATP site. His-461 is an L-aspartate binding site. Position 499 (Glu-499) interacts with ATP. Position 506 (Arg-506) interacts with L-aspartate. Residue 551 to 554 (GLDR) participates in ATP binding.

Belongs to the class-II aminoacyl-tRNA synthetase family. Type 1 subfamily. In terms of assembly, homodimer.

The protein resides in the cytoplasm. The enzyme catalyses tRNA(Asx) + L-aspartate + ATP = L-aspartyl-tRNA(Asx) + AMP + diphosphate. Aspartyl-tRNA synthetase with relaxed tRNA specificity since it is able to aspartylate not only its cognate tRNA(Asp) but also tRNA(Asn). Reaction proceeds in two steps: L-aspartate is first activated by ATP to form Asp-AMP and then transferred to the acceptor end of tRNA(Asp/Asn). This chain is Aspartate--tRNA(Asp/Asn) ligase, found in Prochlorococcus marinus (strain NATL2A).